We begin with the raw amino-acid sequence, 129 residues long: MRKYETIYILQPDLSEDDIKVVADKVQDVITSYKGDFQRLEDWGIRKLAYPINKCARGRYLYLRYDGGREMIAELERRLRLDEKVLRFQSVNITNQPEKPVVEKKPVPVEAEAVESAEAVAAPAETVSE.

Belongs to the bacterial ribosomal protein bS6 family.

Binds together with bS18 to 16S ribosomal RNA. The polypeptide is Small ribosomal subunit protein bS6 (Pelobacter propionicus (strain DSM 2379 / NBRC 103807 / OttBd1)).